The chain runs to 544 residues: Chaperonin GroEL (544 aa).

ATP is bound by residues 30–33, Lys51, 87–91, Gly415, and Asp496; these read TLGP and DGTTT.

Belongs to the chaperonin (HSP60) family. In terms of assembly, forms a cylinder of 14 subunits composed of two heptameric rings stacked back-to-back. Interacts with the co-chaperonin GroES.

It localises to the cytoplasm. The enzyme catalyses ATP + H2O + a folded polypeptide = ADP + phosphate + an unfolded polypeptide.. Its function is as follows. Together with its co-chaperonin GroES, plays an essential role in assisting protein folding. The GroEL-GroES system forms a nano-cage that allows encapsulation of the non-native substrate proteins and provides a physical environment optimized to promote and accelerate protein folding. In Granulibacter bethesdensis (strain ATCC BAA-1260 / CGDNIH1), this protein is Chaperonin GroEL.